Consider the following 155-residue polypeptide: 6,7-dimethyl-8-ribityllumazine synthase (155 aa).

Residues phenylalanine 23, 57–59 (AFE), and 81–83 (AVI) contribute to the 5-amino-6-(D-ribitylamino)uracil site. Position 86 to 87 (86 to 87 (ST)) interacts with (2S)-2-hydroxy-3-oxobutyl phosphate. Histidine 89 serves as the catalytic Proton donor. Position 114 (phenylalanine 114) interacts with 5-amino-6-(D-ribitylamino)uracil. Arginine 128 contributes to the (2S)-2-hydroxy-3-oxobutyl phosphate binding site.

It belongs to the DMRL synthase family.

The enzyme catalyses (2S)-2-hydroxy-3-oxobutyl phosphate + 5-amino-6-(D-ribitylamino)uracil = 6,7-dimethyl-8-(1-D-ribityl)lumazine + phosphate + 2 H2O + H(+). Its pathway is cofactor biosynthesis; riboflavin biosynthesis; riboflavin from 2-hydroxy-3-oxobutyl phosphate and 5-amino-6-(D-ribitylamino)uracil: step 1/2. Catalyzes the formation of 6,7-dimethyl-8-ribityllumazine by condensation of 5-amino-6-(D-ribitylamino)uracil with 3,4-dihydroxy-2-butanone 4-phosphate. This is the penultimate step in the biosynthesis of riboflavin. This Citrifermentans bemidjiense (strain ATCC BAA-1014 / DSM 16622 / JCM 12645 / Bem) (Geobacter bemidjiensis) protein is 6,7-dimethyl-8-ribityllumazine synthase.